Reading from the N-terminus, the 205-residue chain is Small ribosomal subunit protein uS4 (205 aa).

Residues 18–49 (NIWGRPKSPVNKREYGPGQHGQRRKGKLSDFG) are disordered. The S4 RNA-binding domain occupies 94 to 157 (RRLDAIVYRA…KQLALVLEAN (64 aa)).

The protein belongs to the universal ribosomal protein uS4 family. In terms of assembly, part of the 30S ribosomal subunit. Contacts protein S5. The interaction surface between S4 and S5 is involved in control of translational fidelity.

Its function is as follows. One of the primary rRNA binding proteins, it binds directly to 16S rRNA where it nucleates assembly of the body of the 30S subunit. In terms of biological role, with S5 and S12 plays an important role in translational accuracy. In Afipia carboxidovorans (strain ATCC 49405 / DSM 1227 / KCTC 32145 / OM5) (Oligotropha carboxidovorans), this protein is Small ribosomal subunit protein uS4.